A 356-amino-acid polypeptide reads, in one-letter code: uncharacterized protein (356 aa).

Helical transmembrane passes span 7–29 (LLSR…VSLY), 49–71 (YFLN…ISLI), 91–113 (ISPL…TFLL), 270–292 (LFYR…YLFF), 299–316 (QVIP…LVIL), and 329–348 (VLYS…KGVY).

It localises to the cell membrane. This is an uncharacterized protein from Aquifex aeolicus (strain VF5).